We begin with the raw amino-acid sequence, 267 residues long: GTP cyclohydrolase MptA (267 aa).

This sequence belongs to the GTP cyclohydrolase IV family. As to quaternary structure, homodimer. Requires Fe(2+) as cofactor.

The enzyme catalyses GTP + H2O = 7,8-dihydroneopterin 2',3'-cyclic phosphate + formate + diphosphate + H(+). Its pathway is cofactor biosynthesis; 5,6,7,8-tetrahydromethanopterin biosynthesis. Converts GTP to 7,8-dihydro-D-neopterin 2',3'-cyclic phosphate, the first intermediate in the biosynthesis of coenzyme methanopterin. The chain is GTP cyclohydrolase MptA from Pyrococcus furiosus (strain ATCC 43587 / DSM 3638 / JCM 8422 / Vc1).